The chain runs to 98 residues: NADH-ubiquinone oxidoreductase chain 4L (98 aa).

3 helical membrane passes run 1-21, 29-49, and 61-81; these read MPVVYVNIFLAFIVSLMGLLI, SLLCLEGMMLSLFVMLTVTVL, and IILLVFAACEAALGLSLLVMV.

This sequence belongs to the complex I subunit 4L family. Core subunit of respiratory chain NADH dehydrogenase (Complex I) which is composed of 45 different subunits.

Its subcellular location is the mitochondrion inner membrane. The catalysed reaction is a ubiquinone + NADH + 5 H(+)(in) = a ubiquinol + NAD(+) + 4 H(+)(out). Core subunit of the mitochondrial membrane respiratory chain NADH dehydrogenase (Complex I) which catalyzes electron transfer from NADH through the respiratory chain, using ubiquinone as an electron acceptor. Part of the enzyme membrane arm which is embedded in the lipid bilayer and involved in proton translocation. In Ursus americanus (American black bear), this protein is NADH-ubiquinone oxidoreductase chain 4L (MT-ND4L).